The primary structure comprises 289 residues: Probable aquaporin PIP-type 7a (289 aa).

A disordered region spans residues Met1–Pro39. Over Met1–Gly57 the chain is Cytoplasmic. Residues Ile58–Val78 traverse the membrane as a helical segment. Topologically, residues Val79 to Gln91 are extracellular. Residues Gly92–Ser112 form a helical membrane-spanning segment. Topologically, residues Gly113–Ala135 are cytoplasmic. Positions Asn117–Ala119 match the NPA 1 motif. A helical transmembrane segment spans residues Ile136–Phe156. Over Glu157 to Lys178 the chain is Extracellular. The helical transmembrane segment at Gly179–Ala199 threads the bilayer. At Thr200–Pro212 the chain is on the cytoplasmic side. A helical transmembrane segment spans residues Ile213–Ile233. Topologically, residues Thr234–Trp260 are extracellular. The NPA 2 signature appears at Asn239–Ala241. A helical membrane pass occupies residues Ile261–Ile281. Residues Arg282–Lys289 lie on the Cytoplasmic side of the membrane.

This sequence belongs to the MIP/aquaporin (TC 1.A.8) family. PIP (TC 1.A.8.11) subfamily.

It is found in the cell membrane. Aquaporins facilitate the transport of water and small neutral solutes across cell membranes. The chain is Probable aquaporin PIP-type 7a (TRG-31) from Pisum sativum (Garden pea).